We begin with the raw amino-acid sequence, 287 residues long: Glycine--tRNA ligase alpha subunit (287 aa).

It belongs to the class-II aminoacyl-tRNA synthetase family. Tetramer of two alpha and two beta subunits.

The protein localises to the cytoplasm. The enzyme catalyses tRNA(Gly) + glycine + ATP = glycyl-tRNA(Gly) + AMP + diphosphate. This chain is Glycine--tRNA ligase alpha subunit, found in Campylobacter jejuni subsp. jejuni serotype O:23/36 (strain 81-176).